A 293-amino-acid chain; its full sequence is Ribosomal protein L11 methyltransferase (293 aa).

S-adenosyl-L-methionine contacts are provided by T145, G166, D188, and N230.

Belongs to the methyltransferase superfamily. PrmA family.

The protein localises to the cytoplasm. It catalyses the reaction L-lysyl-[protein] + 3 S-adenosyl-L-methionine = N(6),N(6),N(6)-trimethyl-L-lysyl-[protein] + 3 S-adenosyl-L-homocysteine + 3 H(+). Methylates ribosomal protein L11. The chain is Ribosomal protein L11 methyltransferase from Escherichia coli O81 (strain ED1a).